The primary structure comprises 163 residues: NADPH-dependent 7-cyano-7-deazaguanine reductase (163 aa).

The segment covering 1-10 (MSKPPRRSPR) has biased composition (basic residues). Residues 1–23 (MSKPPRRSPRKPTPASPELQLGH) are disordered. Cys-61 acts as the Thioimide intermediate in catalysis. Asp-68 (proton donor) is an active-site residue. Substrate is bound by residues 83–85 (LES) and 102–103 (HE).

It belongs to the GTP cyclohydrolase I family. QueF type 1 subfamily.

It is found in the cytoplasm. The enzyme catalyses 7-aminomethyl-7-carbaguanine + 2 NADP(+) = 7-cyano-7-deazaguanine + 2 NADPH + 3 H(+). Its pathway is tRNA modification; tRNA-queuosine biosynthesis. Its function is as follows. Catalyzes the NADPH-dependent reduction of 7-cyano-7-deazaguanine (preQ0) to 7-aminomethyl-7-deazaguanine (preQ1). The chain is NADPH-dependent 7-cyano-7-deazaguanine reductase from Rhodopseudomonas palustris (strain BisA53).